A 359-amino-acid chain; its full sequence is Phospho-N-acetylmuramoyl-pentapeptide-transferase (359 aa).

The next 10 membrane-spanning stretches (helical) occupy residues 21-41 (YITF…FLLG), 73-93 (TMGG…WADL), 98-118 (IWVT…DDYL), 143-163 (GICL…VPFF), 166-186 (VAPD…VGTS), 202-222 (PLVI…NAII), 237-257 (VTVF…FNAY), 261-281 (IFMG…VAII), 286-306 (ILLT…IFQV), and 336-356 (KIIV…VSTL).

Belongs to the glycosyltransferase 4 family. MraY subfamily. Mg(2+) serves as cofactor.

It localises to the cell inner membrane. It catalyses the reaction UDP-N-acetyl-alpha-D-muramoyl-L-alanyl-gamma-D-glutamyl-meso-2,6-diaminopimeloyl-D-alanyl-D-alanine + di-trans,octa-cis-undecaprenyl phosphate = di-trans,octa-cis-undecaprenyl diphospho-N-acetyl-alpha-D-muramoyl-L-alanyl-D-glutamyl-meso-2,6-diaminopimeloyl-D-alanyl-D-alanine + UMP. It functions in the pathway cell wall biogenesis; peptidoglycan biosynthesis. Functionally, catalyzes the initial step of the lipid cycle reactions in the biosynthesis of the cell wall peptidoglycan: transfers peptidoglycan precursor phospho-MurNAc-pentapeptide from UDP-MurNAc-pentapeptide onto the lipid carrier undecaprenyl phosphate, yielding undecaprenyl-pyrophosphoryl-MurNAc-pentapeptide, known as lipid I. In Desulfosudis oleivorans (strain DSM 6200 / JCM 39069 / Hxd3) (Desulfococcus oleovorans), this protein is Phospho-N-acetylmuramoyl-pentapeptide-transferase.